We begin with the raw amino-acid sequence, 460 residues long: A-type ATP synthase subunit B (460 aa).

This sequence belongs to the ATPase alpha/beta chains family. As to quaternary structure, has multiple subunits with at least A(3), B(3), C, D, E, F, H, I and proteolipid K(x).

It is found in the cell membrane. Functionally, component of the A-type ATP synthase that produces ATP from ADP in the presence of a proton gradient across the membrane. The B chain is a regulatory subunit. The chain is A-type ATP synthase subunit B from Thermoplasma volcanium (strain ATCC 51530 / DSM 4299 / JCM 9571 / NBRC 15438 / GSS1).